The following is a 321-amino-acid chain: Glycerol-3-phosphate dehydrogenase [NAD(P)+] (321 aa).

Residues S14, F15, R35, and K109 each contribute to the NADPH site. K109 and G137 together coordinate sn-glycerol 3-phosphate. NADPH is bound at residue A141. Sn-glycerol 3-phosphate contacts are provided by K192, D252, S262, R263, and N264. K192 acts as the Proton acceptor in catalysis. R263 contacts NADPH. 2 residues coordinate NADPH: L287 and E289.

This sequence belongs to the NAD-dependent glycerol-3-phosphate dehydrogenase family.

The protein resides in the cytoplasm. It carries out the reaction sn-glycerol 3-phosphate + NAD(+) = dihydroxyacetone phosphate + NADH + H(+). The catalysed reaction is sn-glycerol 3-phosphate + NADP(+) = dihydroxyacetone phosphate + NADPH + H(+). Its pathway is membrane lipid metabolism; glycerophospholipid metabolism. Functionally, catalyzes the reduction of the glycolytic intermediate dihydroxyacetone phosphate (DHAP) to sn-glycerol 3-phosphate (G3P), the key precursor for phospholipid synthesis. This Rickettsia felis (strain ATCC VR-1525 / URRWXCal2) (Rickettsia azadi) protein is Glycerol-3-phosphate dehydrogenase [NAD(P)+].